The chain runs to 263 residues: Phosphatidylglycerol--prolipoprotein diacylglyceryl transferase (263 aa).

A run of 3 helical transmembrane segments spans residues 17–37 (LSVR…IFLG), 56–76 (LLFY…VLFY), and 88–108 (IFAV…VLVA). Arg139 serves as a coordination point for a 1,2-diacyl-sn-glycero-3-phospho-(1'-sn-glycerol). 2 helical membrane passes run 176-196 (QLYH…WFTA) and 236-256 (ISMG…MVVF).

It belongs to the Lgt family.

It localises to the cell inner membrane. The catalysed reaction is L-cysteinyl-[prolipoprotein] + a 1,2-diacyl-sn-glycero-3-phospho-(1'-sn-glycerol) = an S-1,2-diacyl-sn-glyceryl-L-cysteinyl-[prolipoprotein] + sn-glycerol 1-phosphate + H(+). The protein operates within protein modification; lipoprotein biosynthesis (diacylglyceryl transfer). Functionally, catalyzes the transfer of the diacylglyceryl group from phosphatidylglycerol to the sulfhydryl group of the N-terminal cysteine of a prolipoprotein, the first step in the formation of mature lipoproteins. The sequence is that of Phosphatidylglycerol--prolipoprotein diacylglyceryl transferase from Dechloromonas aromatica (strain RCB).